A 154-amino-acid chain; its full sequence is Cytochrome c' (154 aa).

A signal peptide spans 1–23; that stretch reads MKHVLASTAAGLMALGLASSAIA. Arginine 35, glutamine 36, arginine 95, cysteine 144, cysteine 147, and histidine 148 together coordinate heme c.

As to quaternary structure, homodimer. Post-translationally, binds 1 heme c group covalently per subunit.

Functionally, cytochrome c' is the most widely occurring bacterial c-type cytochrome. Cytochromes c' are high-spin proteins and the heme has no sixth ligand. Their exact function is not known. The chain is Cytochrome c' (cycA) from Allochromatium vinosum (strain ATCC 17899 / DSM 180 / NBRC 103801 / NCIMB 10441 / D) (Chromatium vinosum).